We begin with the raw amino-acid sequence, 240 residues long: UDP-2,3-diacylglucosamine hydrolase (240 aa).

Mn(2+) contacts are provided by D8, H10, D41, N79, and H114. 79–80 (NR) contributes to the substrate binding site. D122, S160, N164, K167, and H195 together coordinate substrate. Positions 195 and 197 each coordinate Mn(2+).

This sequence belongs to the LpxH family. The cofactor is Mn(2+).

The protein localises to the cell inner membrane. The enzyme catalyses UDP-2-N,3-O-bis[(3R)-3-hydroxytetradecanoyl]-alpha-D-glucosamine + H2O = 2-N,3-O-bis[(3R)-3-hydroxytetradecanoyl]-alpha-D-glucosaminyl 1-phosphate + UMP + 2 H(+). It functions in the pathway glycolipid biosynthesis; lipid IV(A) biosynthesis; lipid IV(A) from (3R)-3-hydroxytetradecanoyl-[acyl-carrier-protein] and UDP-N-acetyl-alpha-D-glucosamine: step 4/6. In terms of biological role, hydrolyzes the pyrophosphate bond of UDP-2,3-diacylglucosamine to yield 2,3-diacylglucosamine 1-phosphate (lipid X) and UMP by catalyzing the attack of water at the alpha-P atom. Involved in the biosynthesis of lipid A, a phosphorylated glycolipid that anchors the lipopolysaccharide to the outer membrane of the cell. This Yersinia pestis bv. Antiqua (strain Angola) protein is UDP-2,3-diacylglucosamine hydrolase.